Consider the following 385-residue polypeptide: 1-deoxy-D-xylulose 5-phosphate reductoisomerase (385 aa).

NADPH-binding residues include T10, G11, S12, I13, K37, and N124. K125 is a 1-deoxy-D-xylulose 5-phosphate binding site. E126 serves as a coordination point for NADPH. D150 is a binding site for Mn(2+). 1-deoxy-D-xylulose 5-phosphate is bound by residues S151, E152, S176, and H199. Position 152 (E152) interacts with Mn(2+). NADPH is bound at residue G205. The 1-deoxy-D-xylulose 5-phosphate site is built by S212, N217, K218, and E221. Residue E221 coordinates Mn(2+).

It belongs to the DXR family. It depends on Mg(2+) as a cofactor. Mn(2+) serves as cofactor.

The enzyme catalyses 2-C-methyl-D-erythritol 4-phosphate + NADP(+) = 1-deoxy-D-xylulose 5-phosphate + NADPH + H(+). The protein operates within isoprenoid biosynthesis; isopentenyl diphosphate biosynthesis via DXP pathway; isopentenyl diphosphate from 1-deoxy-D-xylulose 5-phosphate: step 1/6. Functionally, catalyzes the NADPH-dependent rearrangement and reduction of 1-deoxy-D-xylulose-5-phosphate (DXP) to 2-C-methyl-D-erythritol 4-phosphate (MEP). The chain is 1-deoxy-D-xylulose 5-phosphate reductoisomerase from Clostridium botulinum (strain Kyoto / Type A2).